Consider the following 163-residue polypeptide: ATP synthase subunit b 1 (163 aa).

Residues 6–26 (LAELWVAVAFLLFVGILIYVG) form a helical membrane-spanning segment.

The protein belongs to the ATPase B chain family. As to quaternary structure, F-type ATPases have 2 components, F(1) - the catalytic core - and F(0) - the membrane proton channel. F(1) has five subunits: alpha(3), beta(3), gamma(1), delta(1), epsilon(1). F(0) has three main subunits: a(1), b(2) and c(10-14). The alpha and beta chains form an alternating ring which encloses part of the gamma chain. F(1) is attached to F(0) by a central stalk formed by the gamma and epsilon chains, while a peripheral stalk is formed by the delta and b chains.

Its subcellular location is the cell inner membrane. Functionally, f(1)F(0) ATP synthase produces ATP from ADP in the presence of a proton or sodium gradient. F-type ATPases consist of two structural domains, F(1) containing the extramembraneous catalytic core and F(0) containing the membrane proton channel, linked together by a central stalk and a peripheral stalk. During catalysis, ATP synthesis in the catalytic domain of F(1) is coupled via a rotary mechanism of the central stalk subunits to proton translocation. Its function is as follows. Component of the F(0) channel, it forms part of the peripheral stalk, linking F(1) to F(0). This is ATP synthase subunit b 1 from Xanthobacter autotrophicus (strain ATCC BAA-1158 / Py2).